The following is a 122-amino-acid chain: Large ribosomal subunit protein uL14c (122 aa).

It belongs to the universal ribosomal protein uL14 family. As to quaternary structure, part of the 50S ribosomal subunit.

Its subcellular location is the plastid. The protein resides in the chloroplast. Its function is as follows. Binds to 23S rRNA. This chain is Large ribosomal subunit protein uL14c, found in Chlamydomonas reinhardtii (Chlamydomonas smithii).